Reading from the N-terminus, the 345-residue chain is Glycerol-3-phosphate dehydrogenase [NAD(P)+] (345 aa).

Residues Ser-11, Trp-12, His-32, Arg-33, and Lys-106 each coordinate NADPH. Positions 106, 137, and 139 each coordinate sn-glycerol 3-phosphate. Ala-141 lines the NADPH pocket. Sn-glycerol 3-phosphate is bound by residues Lys-192, Asp-245, Ser-255, Arg-256, and Asn-257. Lys-192 functions as the Proton acceptor in the catalytic mechanism. Arg-256 is a binding site for NADPH. Val-280 and Glu-282 together coordinate NADPH.

The protein belongs to the NAD-dependent glycerol-3-phosphate dehydrogenase family.

The protein localises to the cytoplasm. It carries out the reaction sn-glycerol 3-phosphate + NAD(+) = dihydroxyacetone phosphate + NADH + H(+). It catalyses the reaction sn-glycerol 3-phosphate + NADP(+) = dihydroxyacetone phosphate + NADPH + H(+). It functions in the pathway membrane lipid metabolism; glycerophospholipid metabolism. Catalyzes the reduction of the glycolytic intermediate dihydroxyacetone phosphate (DHAP) to sn-glycerol 3-phosphate (G3P), the key precursor for phospholipid synthesis. The sequence is that of Glycerol-3-phosphate dehydrogenase [NAD(P)+] from Bacillus velezensis (strain DSM 23117 / BGSC 10A6 / LMG 26770 / FZB42) (Bacillus amyloliquefaciens subsp. plantarum).